We begin with the raw amino-acid sequence, 296 residues long: MIQVYNRTTKSYEEELIAGKKYIEWTYESPVGKTITELIAKKKLFSKLYGKYCDTKLSKSKISPFVDSFNIDMAMSKKKINEFKSFNDFFTRELNFDARPINSDNNILISPGDGRITAYEDIDLDNIIQIKGLTYSLKELINDDNVASKYKNGICVVLRLCPTDYHRFHFIDSGIPYENHPIKGHYYSVNPIALKSVPKLFCENKREWSLFKSDNFKDVLHIEVGATCVGSIIQTYSPRVRVNKGDEKGYFKFGGSTTILFFEQGSIEIDADIIEQSKLGFECKVIFGENIGTKVL.

Catalysis depends on charge relay system; for autoendoproteolytic cleavage activity residues Asp-113, His-169, and Ser-256. Ser-256 (schiff-base intermediate with substrate; via pyruvic acid; for decarboxylase activity) is an active-site residue. Ser-256 carries the post-translational modification Pyruvic acid (Ser); by autocatalysis.

It belongs to the phosphatidylserine decarboxylase family. PSD-B subfamily. Prokaryotic type II sub-subfamily. In terms of assembly, heterodimer of a large membrane-associated beta subunit and a small pyruvoyl-containing alpha subunit. Pyruvate is required as a cofactor. In terms of processing, is synthesized initially as an inactive proenzyme. Formation of the active enzyme involves a self-maturation process in which the active site pyruvoyl group is generated from an internal serine residue via an autocatalytic post-translational modification. Two non-identical subunits are generated from the proenzyme in this reaction, and the pyruvate is formed at the N-terminus of the alpha chain, which is derived from the carboxyl end of the proenzyme. The autoendoproteolytic cleavage occurs by a canonical serine protease mechanism, in which the side chain hydroxyl group of the serine supplies its oxygen atom to form the C-terminus of the beta chain, while the remainder of the serine residue undergoes an oxidative deamination to produce ammonia and the pyruvoyl prosthetic group on the alpha chain. During this reaction, the Ser that is part of the protease active site of the proenzyme becomes the pyruvoyl prosthetic group, which constitutes an essential element of the active site of the mature decarboxylase.

The protein resides in the cell membrane. It carries out the reaction a 1,2-diacyl-sn-glycero-3-phospho-L-serine + H(+) = a 1,2-diacyl-sn-glycero-3-phosphoethanolamine + CO2. It functions in the pathway phospholipid metabolism; phosphatidylethanolamine biosynthesis; phosphatidylethanolamine from CDP-diacylglycerol: step 2/2. Functionally, catalyzes the formation of phosphatidylethanolamine (PtdEtn) from phosphatidylserine (PtdSer). The polypeptide is Phosphatidylserine decarboxylase proenzyme (Clostridium beijerinckii (strain ATCC 51743 / NCIMB 8052) (Clostridium acetobutylicum)).